The sequence spans 216 residues: Probable nicotinate-nucleotide adenylyltransferase (216 aa).

This sequence belongs to the NadD family.

The catalysed reaction is nicotinate beta-D-ribonucleotide + ATP + H(+) = deamido-NAD(+) + diphosphate. Its pathway is cofactor biosynthesis; NAD(+) biosynthesis; deamido-NAD(+) from nicotinate D-ribonucleotide: step 1/1. Functionally, catalyzes the reversible adenylation of nicotinate mononucleotide (NaMN) to nicotinic acid adenine dinucleotide (NaAD). In Pelobacter propionicus (strain DSM 2379 / NBRC 103807 / OttBd1), this protein is Probable nicotinate-nucleotide adenylyltransferase.